The primary structure comprises 202 residues: Translation initiation factor IF-3 (202 aa).

This sequence belongs to the IF-3 family. Monomer.

It localises to the cytoplasm. Functionally, IF-3 binds to the 30S ribosomal subunit and shifts the equilibrium between 70S ribosomes and their 50S and 30S subunits in favor of the free subunits, thus enhancing the availability of 30S subunits on which protein synthesis initiation begins. The sequence is that of Translation initiation factor IF-3 from Prochlorococcus marinus (strain NATL2A).